The sequence spans 107 residues: HTH-type transcriptional regulator Rv2034 (107 aa).

Residues 1-93 (MSTYRSPDRA…DLDRFWTRAL (93 aa)) form the HTH arsR-type domain. The H-T-H motif DNA-binding region spans 33–56 (VGELARDLPVSRPAVSQHLKVLKT).

In terms of assembly, homodimer.

Its activity is regulated as follows. DNA-binding ability is not susceptible to zinc, nickel, cobalt, cadmium, lead, copper and manganese ions. Functionally, involved in the regulation of lipid metabolism and hypoxic response. Positively regulates transcription of various genes, such as phoP, groEL2 and dosR. Negatively regulates its own transcription. Acts by binding to a specific palindromic sequence motif in promoter regions. The protein is HTH-type transcriptional regulator Rv2034 of Mycobacterium tuberculosis (strain ATCC 25618 / H37Rv).